We begin with the raw amino-acid sequence, 370 residues long: MVQTLQKKGRVVVGMSGGVDSSVTAWLLKQQGYEVVGLFMKNWEDDDDSEYCSTRQDLLDAASVADLIGVEFEYVNFASEYKDRVFADFLREYSAGRTPNPDVLCNAEIKFKAFLDHAMSLGAEHIATGHYARVRAVDTARGQRFQLLKALDASKDQSYFLHRLNQAQLSRTLFPLGELHKTEVRRIAHEIGLHNAAKKDSTGICFIGERPFREFLNRYLPTAPGPILTPEGRRLGQHHGLAFYTLGQRKGLGIGGVKGQQREDGTADAWYSARKDLKNNALYVVQGHDHPWLLSDTLRAQDVNWVDGEAPAAGAYAAKTRYRQADAPCELRADEAGFDLSFAQAQWAVTPGQSAVLYDGDVCLGGGIII.

ATP-binding positions include 14-21 and Met40; that span reads GMSGGVDS. The tract at residues 100–102 is interaction with target base in tRNA; sequence NPD. Residue Cys105 is the Nucleophile of the active site. Cys105 and Cys205 are disulfide-bonded. Gly129 is a binding site for ATP. The interaction with tRNA stretch occupies residues 155–157; sequence KDQ. The active-site Cysteine persulfide intermediate is Cys205. The interval 321–322 is interaction with tRNA; it reads RY.

Belongs to the MnmA/TRMU family.

It is found in the cytoplasm. It catalyses the reaction S-sulfanyl-L-cysteinyl-[protein] + uridine(34) in tRNA + AH2 + ATP = 2-thiouridine(34) in tRNA + L-cysteinyl-[protein] + A + AMP + diphosphate + H(+). In terms of biological role, catalyzes the 2-thiolation of uridine at the wobble position (U34) of tRNA, leading to the formation of s(2)U34. The polypeptide is tRNA-specific 2-thiouridylase MnmA (Bordetella avium (strain 197N)).